The following is a 366-amino-acid chain: Zinc finger CCCH domain-containing protein 11 (366 aa).

Residues 43 to 66 form a disordered region; sequence LHQAVQPKPDPTKTAAKKKKEEEK. The stretch at 54 to 79 forms a coiled coil; that stretch reads TKTAAKKKKEEEKAREKELNDLFKVA. 2 consecutive C3H1-type zinc fingers follow at residues 90–117 and 160–198; these read DPKSIVCEFFKVGQCQKGFKCKFSHDLN and KPTDIVCKYFLDAVEKKQYGWFWVCPNGGKDCHYRHALP. Positions 208–234 form a coiled coil; sequence KALLEEESEKIAIEDEIEDQRKKVKTT. Positions 293–338 are disordered; sequence YERQEESEANEEPSNKNQDEGPSSSTSNGKEVEESDDEDINIDDDL. A compositionally biased stretch (polar residues) spans 312–321; the sequence is EGPSSSTSNG. Acidic residues predominate over residues 325–338; sequence EESDDEDINIDDDL.

The sequence is that of Zinc finger CCCH domain-containing protein 11 from Oryza sativa subsp. japonica (Rice).